The sequence spans 1071 residues: Carbamoyl phosphate synthase large chain (1071 aa).

The carboxyphosphate synthetic domain stretch occupies residues 1–403 (MPKRTDLKSI…SFQKALRGLE (403 aa)). ATP is bound by residues arginine 129, arginine 169, glycine 175, glycine 176, glutamine 208, valine 210, glutamate 215, glycine 241, valine 242, histidine 243, glutamine 285, and glutamate 299. In terms of domain architecture, ATP-grasp 1 spans 133–328 (KEAMEKIGLS…IAKVAAKLAV (196 aa)). Residues glutamine 285, glutamate 299, and asparagine 301 each contribute to the Mg(2+) site. Positions 285, 299, and 301 each coordinate Mn(2+). Positions 404–548 (TGLCGFNPRS…YSTYEEECES (145 aa)) are oligomerization domain. The carbamoyl phosphate synthetic domain stretch occupies residues 549 to 930 (RPSDRKKVMI…AYYKAQLGAG (382 aa)). Residues 673–864 (QKVLNDLGLR…LAKVGARCMA (192 aa)) enclose the ATP-grasp 2 domain. Residues arginine 709, phenylalanine 748, leucine 750, glutamate 755, glycine 780, isoleucine 781, histidine 782, serine 783, glutamine 823, and glutamate 835 each coordinate ATP. 3 residues coordinate Mg(2+): glutamine 823, glutamate 835, and asparagine 837. The Mn(2+) site is built by glutamine 823, glutamate 835, and asparagine 837. An MGS-like domain is found at 931-1071 (ERLNPTGKIF…ELHGRLKNRN (141 aa)). Positions 931 to 1071 (ERLNPTGKIF…ELHGRLKNRN (141 aa)) are allosteric domain.

It belongs to the CarB family. Composed of two chains; the small (or glutamine) chain promotes the hydrolysis of glutamine to ammonia, which is used by the large (or ammonia) chain to synthesize carbamoyl phosphate. Tetramer of heterodimers (alpha,beta)4. The cofactor is Mg(2+). It depends on Mn(2+) as a cofactor.

The enzyme catalyses hydrogencarbonate + L-glutamine + 2 ATP + H2O = carbamoyl phosphate + L-glutamate + 2 ADP + phosphate + 2 H(+). It carries out the reaction hydrogencarbonate + NH4(+) + 2 ATP = carbamoyl phosphate + 2 ADP + phosphate + 2 H(+). It participates in amino-acid biosynthesis; L-arginine biosynthesis; carbamoyl phosphate from bicarbonate: step 1/1. It functions in the pathway pyrimidine metabolism; UMP biosynthesis via de novo pathway; (S)-dihydroorotate from bicarbonate: step 1/3. In terms of biological role, large subunit of the glutamine-dependent carbamoyl phosphate synthetase (CPSase). CPSase catalyzes the formation of carbamoyl phosphate from the ammonia moiety of glutamine, carbonate, and phosphate donated by ATP, constituting the first step of 2 biosynthetic pathways, one leading to arginine and/or urea and the other to pyrimidine nucleotides. The large subunit (synthetase) binds the substrates ammonia (free or transferred from glutamine from the small subunit), hydrogencarbonate and ATP and carries out an ATP-coupled ligase reaction, activating hydrogencarbonate by forming carboxy phosphate which reacts with ammonia to form carbamoyl phosphate. This is Carbamoyl phosphate synthase large chain from Neisseria meningitidis serogroup B (strain ATCC BAA-335 / MC58).